A 506-amino-acid polypeptide reads, in one-letter code: MEERYLELDRSRKNDFLYPFIFREYIYTFAHDHSLNRSILLENVGYDNKSSLLIVKRLITRMYQQNHLIISANDSNQNLFFRYNKNLYYQMISEGFAVIVEIPFSLRLVSSLDLERSEIVKSHKLRSIHSIFPFLEDKFPHLNYVSDILIPYPIHLEKLVQTLRYWVKDPSSLHLLRLFLHEYWNLNSLIIPKKFITIFIKRNPRFFLFLYNSHVYEYESIFFFLRNQSFHLRSIFLRVLLERIFFYGKIEHFAEVFANDFQAILWLFKDPFMHYVRYQGKSILASKDRPFLMKKWKYYLVNLCQCHFYVWFQPEKIYINSLSKHSLNFLGYLSNVQLNPLVVRSQMLENSFIIDKDSTMKKLDTIVPIIPLIGSLAKTKFCNAVGHPISKPIRADSADSDIIDRFVRICRNLSHYYSGSSKKKSLYRIKYILRLSCVKTLARKHKSTVRAFLKRLGSELLEEFFTEEEQILSLIFPKVSSSSRRLYRGRVWYLDIISINDLANHE.

This sequence belongs to the intron maturase 2 family. MatK subfamily.

The protein localises to the plastid. It localises to the chloroplast. Its function is as follows. Usually encoded in the trnK tRNA gene intron. Probably assists in splicing its own and other chloroplast group II introns. This is Maturase K from Manihot esculenta (Cassava).